A 254-amino-acid chain; its full sequence is 3-deoxy-manno-octulosonate cytidylyltransferase (254 aa).

Belongs to the KdsB family.

It is found in the cytoplasm. It carries out the reaction 3-deoxy-alpha-D-manno-oct-2-ulosonate + CTP = CMP-3-deoxy-beta-D-manno-octulosonate + diphosphate. The protein operates within nucleotide-sugar biosynthesis; CMP-3-deoxy-D-manno-octulosonate biosynthesis; CMP-3-deoxy-D-manno-octulosonate from 3-deoxy-D-manno-octulosonate and CTP: step 1/1. It participates in bacterial outer membrane biogenesis; lipopolysaccharide biosynthesis. Activates KDO (a required 8-carbon sugar) for incorporation into bacterial lipopolysaccharide in Gram-negative bacteria. The polypeptide is 3-deoxy-manno-octulosonate cytidylyltransferase (Ectopseudomonas mendocina (strain ymp) (Pseudomonas mendocina)).